A 57-amino-acid chain; its full sequence is Large ribosomal subunit protein bL32 (57 aa).

Over residues 1 to 19 the composition is skewed to basic residues; that stretch reads MATPKRRMSRANTRSRRAQ. A disordered region spans residues 1–20; it reads MATPKRRMSRANTRSRRAQW.

The protein belongs to the bacterial ribosomal protein bL32 family.

This is Large ribosomal subunit protein bL32 from Mycobacterium leprae (strain Br4923).